We begin with the raw amino-acid sequence, 86 residues long: Ferredoxin YfhL (86 aa).

4Fe-4S ferredoxin-type domains are found at residues 1–29 and 31–65; these read MALLITKKCINCDMCEPECPNEAISMGDH and YEINSDKCTECVGHYETPTCQKVCPIPNTIVKDPA. Positions 9, 12, 15, 19, 38, 41, 50, and 54 each coordinate [4Fe-4S] cluster.

It depends on [4Fe-4S] cluster as a cofactor.

In terms of biological role, ferredoxins are iron-sulfur proteins that transfer electrons in a wide variety of metabolic reactions. This chain is Ferredoxin YfhL (yfhL), found in Escherichia coli (strain K12).